The chain runs to 213 residues: Golgi SNAP receptor complex member 2 homolog memb-1 (213 aa).

The Cytoplasmic portion of the chain corresponds to methionine 1 to aspartate 189. Residues tryptophan 190 to phenylalanine 210 traverse the membrane as a helical; Anchor for type IV membrane protein segment. At tryptophan 211–glycine 213 the chain is on the vesicular side.

This sequence belongs to the GOSR2 family. Part of a unique SNARE complex.

Its subcellular location is the golgi apparatus. It is found in the cis-Golgi network membrane. The protein localises to the golgi apparatus membrane. It localises to the endoplasmic reticulum membrane. Involved in transport of proteins from the cis/medial-Golgi to the trans-Golgi network. The sequence is that of Golgi SNAP receptor complex member 2 homolog memb-1 from Caenorhabditis elegans.